We begin with the raw amino-acid sequence, 226 residues long: Orotate phosphoribosyltransferase (226 aa).

5-phospho-alpha-D-ribose 1-diphosphate is bound at residue lysine 29. 37 to 38 (FF) is an orotate binding site. 5-phospho-alpha-D-ribose 1-diphosphate is bound by residues 75-76 (YK), arginine 101, lysine 102, lysine 105, histidine 107, and 126-134 (DDVISAGTS). Orotate-binding residues include serine 130 and arginine 158.

This sequence belongs to the purine/pyrimidine phosphoribosyltransferase family. PyrE subfamily. Homodimer. Mg(2+) serves as cofactor.

The enzyme catalyses orotidine 5'-phosphate + diphosphate = orotate + 5-phospho-alpha-D-ribose 1-diphosphate. It participates in pyrimidine metabolism; UMP biosynthesis via de novo pathway; UMP from orotate: step 1/2. Functionally, catalyzes the transfer of a ribosyl phosphate group from 5-phosphoribose 1-diphosphate to orotate, leading to the formation of orotidine monophosphate (OMP). This is Orotate phosphoribosyltransferase from Ralstonia nicotianae (strain ATCC BAA-1114 / GMI1000) (Ralstonia solanacearum).